We begin with the raw amino-acid sequence, 562 residues long: Arginine--tRNA ligase (562 aa).

Residues Pro122–His132 carry the 'HIGH' region motif.

The protein belongs to the class-I aminoacyl-tRNA synthetase family. As to quaternary structure, monomer.

Its subcellular location is the cytoplasm. It catalyses the reaction tRNA(Arg) + L-arginine + ATP = L-arginyl-tRNA(Arg) + AMP + diphosphate. The protein is Arginine--tRNA ligase of Chlamydia abortus (strain DSM 27085 / S26/3) (Chlamydophila abortus).